A 451-amino-acid chain; its full sequence is Photosystem II CP43 reaction center protein (451 aa).

The Cytoplasmic segment spans residues 1-46 (ATNRDQESSGFAWWAGNARLINLSGKLLGAHVAHAGLIVFWAGAMT). 3 residues coordinate chlorophyll a: tryptophan 13, leucine 27, and alanine 30. A helical membrane pass occupies residues 47–71 (LFELAHFIPEKPMYEQGLILIPHIA). Residues 72 to 111 (TLGWGVGPGGEVVDTFPFFVVGVVHLISSAVLGFGGVYHA) are Lumenal-facing. Chlorophyll a contacts are provided by valine 92 and glycine 106. Residues 112 to 133 (IRGPETLEEYSSFFGYDWKDKN) form a helical membrane-spanning segment. The Cytoplasmic portion of the chain corresponds to 134 to 155 (KMTTILGFHLIVLGIGALLLVA). Isoleucine 138 contributes to the chlorophyll a binding site. The chain crosses the membrane as a helical span at residues 156-178 (KAMFFGGLYDTWAPGGGDVRVIT). The Lumenal segment spans residues 179 to 232 (NPTLDPRVIFGYLLKSPFGGEGWIVSVNNLEDVVGGHIWIGLICIAGGIWHILT). Chlorophyll a contacts are provided by valine 211 and glycine 225. Residues 233–253 (TPFGWARRAFIWSGEAYLSYS) form a helical membrane-spanning segment. Residues 254–268 (LGALSMMGFIATCFV) are Cytoplasmic-facing. The chain crosses the membrane as a helical span at residues 269–290 (WFNNTVYPSEFYGPTGPEASQA). Topologically, residues 291–424 (QAMTFLIRDQ…FLVGHLWHAG (134 aa)) are lumenal. Position 345 (glutamate 345) interacts with [CaMn4O5] cluster. Chlorophyll a contacts are provided by leucine 404, phenylalanine 415, and glycine 418. Residues 425-449 (RARAAAAGFEKGIDRESEPVLSMPS) traverse the membrane as a helical segment. Over 450-451 (LD) the chain is Cytoplasmic.

This sequence belongs to the PsbB/PsbC family. PsbC subfamily. In terms of assembly, PSII is composed of 1 copy each of membrane proteins PsbA, PsbB, PsbC, PsbD, PsbE, PsbF, PsbH, PsbI, PsbJ, PsbK, PsbL, PsbM, PsbT, PsbX, PsbY, PsbZ, Psb30/Ycf12, peripheral proteins PsbO, CyanoQ (PsbQ), PsbU, PsbV and a large number of cofactors. It forms dimeric complexes. It depends on Binds multiple chlorophylls and provides some of the ligands for the Ca-4Mn-5O cluster of the oxygen-evolving complex. It may also provide a ligand for a Cl- that is required for oxygen evolution. PSII binds additional chlorophylls, carotenoids and specific lipids. as a cofactor.

It localises to the cellular thylakoid membrane. Functionally, one of the components of the core complex of photosystem II (PSII). It binds chlorophyll and helps catalyze the primary light-induced photochemical processes of PSII. PSII is a light-driven water:plastoquinone oxidoreductase, using light energy to abstract electrons from H(2)O, generating O(2) and a proton gradient subsequently used for ATP formation. In Thermostichus vulcanus (Synechococcus vulcanus), this protein is Photosystem II CP43 reaction center protein.